A 72-amino-acid polypeptide reads, in one-letter code: DNA gyrase inhibitor YacG (72 aa).

Zn(2+) is bound by residues C17, C20, C32, and C36. The disordered stretch occupies residues 51 to 72 (IPGPEEEEMSYPPRSDDENRSR).

It belongs to the DNA gyrase inhibitor YacG family. Interacts with GyrB. It depends on Zn(2+) as a cofactor.

Inhibits all the catalytic activities of DNA gyrase by preventing its interaction with DNA. Acts by binding directly to the C-terminal domain of GyrB, which probably disrupts DNA binding by the gyrase. The sequence is that of DNA gyrase inhibitor YacG from Methylorubrum extorquens (strain PA1) (Methylobacterium extorquens).